The chain runs to 239 residues: tRNA (guanine-N(1)-)-methyltransferase (239 aa).

S-adenosyl-L-methionine contacts are provided by residues Gly108 and 127–132 (LGDFVL).

The protein belongs to the RNA methyltransferase TrmD family. Homodimer.

Its subcellular location is the cytoplasm. It catalyses the reaction guanosine(37) in tRNA + S-adenosyl-L-methionine = N(1)-methylguanosine(37) in tRNA + S-adenosyl-L-homocysteine + H(+). Functionally, specifically methylates guanosine-37 in various tRNAs. In Streptococcus thermophilus (strain CNRZ 1066), this protein is tRNA (guanine-N(1)-)-methyltransferase.